A 218-amino-acid polypeptide reads, in one-letter code: uncharacterized protein (218 aa).

It belongs to the HAD-like hydrolase superfamily.

Its subcellular location is the cytoplasm. The protein resides in the nucleus. This is an uncharacterized protein from Saccharomyces cerevisiae (strain ATCC 204508 / S288c) (Baker's yeast).